The following is a 453-amino-acid chain: Nuclear distribution protein PAC1-2 (453 aa).

Residues 9–41 (QADELHKSIVAYLTANNLSTTAATLREELSLGE) enclose the LisH domain. Residues 63-87 (VVRLQKKVMDLESRSVALQSELEHS) are a coiled coil. The tract at residues 84–108 (LEHSTPASLSKRKDPTSWLPRSPPR) is disordered. 7 WD repeats span residues 113 to 154 (SHQA…RTLK), 156 to 196 (HTRA…KNTR), 200 to 243 (GHDH…CIKT), 246 to 285 (GHTGWVRDVVPSLDGRFLLSSGTDQTARLWDISAADPESK), 290 to 350 (GHEN…IKTL), 352 to 391 (GHDNWVSGLVFHPGGKYLLSVADDKTLRCWDLGDDGRCVK), and 396 to 448 (AHGQ…DKVV).

This sequence belongs to the WD repeat LIS1/nudF family. Self-associates. Interacts with NDL1 and dynein.

It localises to the cytoplasm. The protein resides in the cytoskeleton. It is found in the spindle pole. In terms of biological role, positively regulates the activity of the minus-end directed microtubule motor protein dynein. May enhance dynein-mediated microtubule sliding by targeting dynein to the microtubule plus end. Required for nuclear migration during vegetative growth as well as development. Required for retrograde early endosome (EE) transport from the hyphal tip. Required for localization of dynein to the mitotic spindle poles. Recruits additional proteins to the dynein complex at SPBs. The sequence is that of Nuclear distribution protein PAC1-2 from Chaetomium globosum (strain ATCC 6205 / CBS 148.51 / DSM 1962 / NBRC 6347 / NRRL 1970) (Soil fungus).